A 495-amino-acid polypeptide reads, in one-letter code: UDP-N-acetylmuramoyl-L-alanyl-D-glutamate--2,6-diaminopimelate ligase (495 aa).

UDP-N-acetyl-alpha-D-muramoyl-L-alanyl-D-glutamate is bound by residues Leu28, Ser30, and 45-47; that span reads HRV. ATP is bound at residue 117-123; sequence GTNGKTT. Residues Asn158, 159–160, Ser186, Gln192, and Arg194 each bind UDP-N-acetyl-alpha-D-muramoyl-L-alanyl-D-glutamate; that span reads TT. Lys226 carries the N6-carboxylysine modification. Residues Arg394, 418–421, Gly469, and Glu473 contribute to the meso-2,6-diaminopimelate site; that span reads DNPR. A Meso-diaminopimelate recognition motif motif is present at residues 418-421; it reads DNPR.

This sequence belongs to the MurCDEF family. MurE subfamily. The cofactor is Mg(2+). Post-translationally, carboxylation is probably crucial for Mg(2+) binding and, consequently, for the gamma-phosphate positioning of ATP.

It localises to the cytoplasm. It carries out the reaction UDP-N-acetyl-alpha-D-muramoyl-L-alanyl-D-glutamate + meso-2,6-diaminopimelate + ATP = UDP-N-acetyl-alpha-D-muramoyl-L-alanyl-gamma-D-glutamyl-meso-2,6-diaminopimelate + ADP + phosphate + H(+). The protein operates within cell wall biogenesis; peptidoglycan biosynthesis. Its function is as follows. Catalyzes the addition of meso-diaminopimelic acid to the nucleotide precursor UDP-N-acetylmuramoyl-L-alanyl-D-glutamate (UMAG) in the biosynthesis of bacterial cell-wall peptidoglycan. The chain is UDP-N-acetylmuramoyl-L-alanyl-D-glutamate--2,6-diaminopimelate ligase from Histophilus somni (strain 129Pt) (Haemophilus somnus).